The sequence spans 64 residues: Large ribosomal subunit protein bL33c (64 aa).

It belongs to the bacterial ribosomal protein bL33 family.

It is found in the plastid. The protein resides in the organellar chromatophore. In Paulinella chromatophora, this protein is Large ribosomal subunit protein bL33c.